The sequence spans 560 residues: Membrane protein insertase YidC (560 aa).

The next 6 helical transmembrane spans lie at 5–25 (IINLIAAVVLSLSIIFGWQYF), 334–354 (AIDFGWFYIITKPVFYAMNFF), 357–377 (YVGNFGISILIVTVIIKLLMF), 431–451 (LPILVQIPVFFSIYKVLYVTI), 476–496 (LFGLLPFAPPSFLMIGAWPIL), and 522–542 (FMPLIFLFMFSSFPVGLLIYW).

The protein belongs to the OXA1/ALB3/YidC family. Type 1 subfamily. As to quaternary structure, interacts with the Sec translocase complex via SecD. Specifically interacts with transmembrane segments of nascent integral membrane proteins during membrane integration.

Its subcellular location is the cell inner membrane. Its function is as follows. Required for the insertion and/or proper folding and/or complex formation of integral membrane proteins into the membrane. Involved in integration of membrane proteins that insert both dependently and independently of the Sec translocase complex, as well as at least some lipoproteins. Aids folding of multispanning membrane proteins. In Rickettsia prowazekii (strain Madrid E), this protein is Membrane protein insertase YidC.